We begin with the raw amino-acid sequence, 140 residues long: Large ribosomal subunit protein uL16 (140 aa).

Basic residues predominate over residues methionine 1–lysine 14. Residues methionine 1–threonine 20 form a disordered region.

It belongs to the universal ribosomal protein uL16 family. In terms of assembly, part of the 50S ribosomal subunit.

In terms of biological role, binds 23S rRNA and is also seen to make contacts with the A and possibly P site tRNAs. In Geotalea daltonii (strain DSM 22248 / JCM 15807 / FRC-32) (Geobacter daltonii), this protein is Large ribosomal subunit protein uL16.